The sequence spans 1219 residues: Disease resistance-like protein DSC1 (1219 aa).

Residues 9-176 (AEFDVFLSFR…EIAVDTFKKL (168 aa)) form the TIR domain. The active site involves glutamate 83. One can recognise an NB-ARC domain in the interval 197–446 (LEKLLSWEDL…DIACFFRSEN (250 aa)). ATP is bound at residue 216–222 (GMVGIGK). 11 LRR repeats span residues 468–493 (LVDK…MAKE), 538–563 (TDKI…AFQG), 597–619 (PNEL…DFDP), 620–642 (KNLV…EKDV), 665–689 (AHNL…INCL), 690–713 (EKLI…IKTQ), 733–757 (SENV…QTFR), 759–780 (LALL…LYKL), 804–827 (MESL…MHLS), 854–877 (CSRL…IGGL), and 878–899 (SSLQ…SFNQ).

Belongs to the disease resistance NB-LRR family. As to quaternary structure, interacts with CAMTA3 and DSC2.

It catalyses the reaction NAD(+) + H2O = ADP-D-ribose + nicotinamide + H(+). Its function is as follows. TIR-NB-LRR receptor-like protein involved in plant defense. Acts as a trigger of hypersensitive response (HR). Functions as a guard of CAMTA3, a negative regulator of immunity, during pathogen infection. This is Disease resistance-like protein DSC1 from Arabidopsis thaliana (Mouse-ear cress).